We begin with the raw amino-acid sequence, 219 residues long: Capsid protein (219 aa).

Positions 5 to 29 (RRRRVVRRRKPVRRLRRRRRRFFKR) are nuclear localization signals.

It belongs to the circoviridae capsid protein family. Homomultimer. Assembles in the nucleus, presumably in an immature form, then migrates to the cytoplasm once assembled as mature virion. Interacts with Rep; this interaction relocates Rep into the nucleus.

Its subcellular location is the host nucleus. The protein resides in the virion. Self-assembles to form the virion icosahedral capsid with a T=1 symmetry. This very small capsid (17-22 nm in diameter) allows the virus to be very stable in the environment and resistant to some disinfectants, including detergents. Essential for the initial attachment to heparan sulfate moieties and chondroitin sulfate B of the host cell surface proteoglycans. After attachment, the virus is endocytosed and traffics to the nucleus. The capsid protein binds and transports the viral genome and Rep across the nuclear envelope. The protein is Capsid protein (Cap) of Homo sapiens (Human).